The chain runs to 172 residues: MTYFVLFLGLCFVLGGLAVASNPSPYYGVVGLVLASVAGCAWLLSLGVSFVSLVLFMVYLGGMLVVFVYSVSLAADPFPEAWGDWRVVGYGMGFVAVLVMGMVVGGFECWDLGVVTVDSVGMFSVRLDFGGVAMFYSCGVGMFLVAGWGLLLTLFVVLELVRGLTRGAIRAV.

A run of 5 helical transmembrane segments spans residues 1–21, 27–47, 48–68, 87–107, and 138–158; these read MTYF…AVAS, YGVV…LSLG, VSFV…VVFV, VVGY…VGGF, and CGVG…FVVL.

This sequence belongs to the complex I subunit 6 family.

The protein resides in the mitochondrion membrane. It catalyses the reaction a ubiquinone + NADH + 5 H(+)(in) = a ubiquinol + NAD(+) + 4 H(+)(out). In terms of biological role, core subunit of the mitochondrial membrane respiratory chain NADH dehydrogenase (Complex I) that is believed to belong to the minimal assembly required for catalysis. Complex I functions in the transfer of electrons from NADH to the respiratory chain. The immediate electron acceptor for the enzyme is believed to be ubiquinone. This is NADH-ubiquinone oxidoreductase chain 6 (MT-ND6) from Uria lomvia (Thick-billed murre).